We begin with the raw amino-acid sequence, 198 residues long: Recombination protein RecR (198 aa).

A C4-type zinc finger spans residues 56–71; sequence CHVCGNVDTGDPCGIC. Residues 79 to 174 enclose the Toprim domain; it reads RMLCVVEEVA…RLTQLAHGLP (96 aa).

The protein belongs to the RecR family.

Functionally, may play a role in DNA repair. It seems to be involved in an RecBC-independent recombinational process of DNA repair. It may act with RecF and RecO. The polypeptide is Recombination protein RecR (Rhizorhabdus wittichii (strain DSM 6014 / CCUG 31198 / JCM 15750 / NBRC 105917 / EY 4224 / RW1) (Sphingomonas wittichii)).